Consider the following 187-residue polypeptide: Cytokinin riboside 5'-monophosphate phosphoribohydrolase (187 aa).

Substrate-binding positions include glutamate 80, 98–99 (RK), 115–121 (GVGTLDE), and threonine 127.

This sequence belongs to the LOG family.

The catalysed reaction is N(6)-(dimethylallyl)adenosine 5'-phosphate + H2O = N(6)-dimethylallyladenine + D-ribose 5-phosphate. The enzyme catalyses 9-ribosyl-trans-zeatin 5'-phosphate + H2O = trans-zeatin + D-ribose 5-phosphate. In terms of biological role, catalyzes the hydrolytic removal of ribose 5'-monophosphate from nitrogen N6-modified adenosines, the final step of bioactive cytokinin synthesis. This Mycobacterium marinum (strain ATCC BAA-535 / M) protein is Cytokinin riboside 5'-monophosphate phosphoribohydrolase.